A 600-amino-acid chain; its full sequence is Tripeptidyl-peptidase 1 (600 aa).

A signal peptide spans 1 to 22 (MNIKFNLIIIILFILFISNVNC). Positions 23–220 (KKIKNKKHLT…GGGGKVNGIG (198 aa)) are cleaved as a propeptide — removed in mature form. N-linked (GlcNAc...) asparagine glycosylation is found at asparagine 91, asparagine 259, and asparagine 266. Residues 248–600 (YLSPDLIRKE…FDELVKYCLE (353 aa)) form the Peptidase S53 domain. Residues glutamate 318 and aspartate 322 each act as charge relay system in the active site. Cysteines 411 and 570 form a disulfide. Residues asparagine 475 and asparagine 483 are each glycosylated (N-linked (GlcNAc...) asparagine). Serine 514 (charge relay system) is an active-site residue. Ca(2+) is bound by residues aspartate 559, isoleucine 560, glycine 579, and aspartate 581.

In terms of assembly, monomer. Ca(2+) serves as cofactor. Activated by autocatalytic proteolytical processing upon acidification. N-glycosylation is required for processing and activity.

Its subcellular location is the secreted. It catalyses the reaction Release of an N-terminal tripeptide from a polypeptide, but also has endopeptidase activity.. Functionally, serine protease with tripeptidyl-peptidase I activity. The chain is Tripeptidyl-peptidase 1 (tpp1) from Dictyostelium discoideum (Social amoeba).